The sequence spans 225 residues: Techylectin-like protein (225 aa).

Residues Cys-32 to Lys-225 enclose the Fibrinogen C-terminal domain. Cysteines 41 and 60 form a disulfide. The Cell attachment site motif lies at Arg-75–Asp-77. Asp-164 and Thr-170 together coordinate Ca(2+). Residues Cys-172 and Cys-185 are joined by a disulfide bond.

As to expression, expressed by the venom gland.

Its subcellular location is the secreted. Its function is as follows. Lectin involved in innate immunity. In Phoneutria nigriventer (Brazilian armed spider), this protein is Techylectin-like protein.